The chain runs to 450 residues: Sorting nexin-4 (450 aa).

The residue at position 1 (Met1) is an N-acetylmethionine. The disordered stretch occupies residues 1-46; the sequence is MEQAPPDPEKLLQPGPLEPLGGPGAVLEAAVGEENEGTREDGSGVD. Over residues 11–20 the composition is skewed to low complexity; it reads LLQPGPLEPL. The PX domain occupies 61–187; sequence SVSEAEKRTG…YSFLTQEGNW (127 aa). A 1,2-diacyl-sn-glycero-3-phospho-(1D-myo-inositol-3-phosphate) contacts are provided by Arg106, Ser108, Lys132, and Arg154.

It belongs to the sorting nexin family. Heterodimer; heterodimerizes with SNX7 or SNX30. Interacts with WWC1/KIBRA. Identified in a complex with WWC1/KIBRA and dynein components DYNLL1 and DYNC1I2. Interacts with BIN1.

It is found in the early endosome. It localises to the early endosome membrane. Involved in the regulation of endocytosis and in several stages of intracellular trafficking. Plays a role in recycling endocytosed transferrin receptor and prevent its degradation. Involved in autophagosome assembly by regulating trafficking and recycling of phospholipid scramblase ATG9A. The polypeptide is Sorting nexin-4 (Mus musculus (Mouse)).